The primary structure comprises 345 residues: Isopentenyl-diphosphate delta-isomerase (345 aa).

6-7 (RK) is a substrate binding site. Residues 63-65 (SMT), Ser93, and Asn122 contribute to the FMN site. 93 to 95 (SQR) provides a ligand contact to substrate. Gln156 is a binding site for substrate. Glu157 lines the Mg(2+) pocket. FMN-binding positions include Lys188, Thr218, 265–267 (GLR), and 286–287 (AL).

This sequence belongs to the IPP isomerase type 2 family. In terms of assembly, homooctamer. Dimer of tetramers. The cofactor is FMN. It depends on NADPH as a cofactor. Requires Mg(2+) as cofactor.

The protein resides in the cytoplasm. The catalysed reaction is isopentenyl diphosphate = dimethylallyl diphosphate. Involved in the biosynthesis of isoprenoids. Catalyzes the 1,3-allylic rearrangement of the homoallylic substrate isopentenyl (IPP) to its allylic isomer, dimethylallyl diphosphate (DMAPP). In Archaeoglobus fulgidus (strain ATCC 49558 / DSM 4304 / JCM 9628 / NBRC 100126 / VC-16), this protein is Isopentenyl-diphosphate delta-isomerase.